Reading from the N-terminus, the 451-residue chain is MRLSRYFLPVLKETPSEAQVVSHRYMLRAGMIKQSAAGIYSWLPLGYRVLKKIEGIVHEEQMRAGHIPMLMPTIQSADLWRESGRYDAYGEEMLRIRDRHDRDMLFTPTAEELITDIFRANVSSYKDLPLTMYQIQWKFRDEIRPRFGVMRGREFYMKDGYNFDLTKEDALHAYNRHLVTYLRTYERMGLQAIPMRADGGPIGGDYTHEFLVLAETGESEVFYDSEITDLTFGAREIDYDNVEQCQAVLEEFTSRYARTDETHDEALFNAVPEERRRVARGIEVGQIFYFGTKYSEALGATVQTADGQSVPVHMGSHGIGVSRLLGAIIEASHDDKGIIWPEGVTPFHCGIVNLKQGDDEADAACEQLYAALTAIGLEPLYDDRKERAGGKFASMDLIGLPWRITVGPRGLKNGVVEVTSRRTGESEEMSPEDAVKKIAAIYANHPTPRGF.

This sequence belongs to the class-II aminoacyl-tRNA synthetase family. ProS type 2 subfamily. As to quaternary structure, homodimer.

It localises to the cytoplasm. The catalysed reaction is tRNA(Pro) + L-proline + ATP = L-prolyl-tRNA(Pro) + AMP + diphosphate. In terms of biological role, catalyzes the attachment of proline to tRNA(Pro) in a two-step reaction: proline is first activated by ATP to form Pro-AMP and then transferred to the acceptor end of tRNA(Pro). The protein is Proline--tRNA ligase of Ruegeria sp. (strain TM1040) (Silicibacter sp.).